A 203-amino-acid polypeptide reads, in one-letter code: Shikimate kinase (203 aa).

An ATP-binding site is contributed by 38–43 (GAGKST). Ser42 is a binding site for Mg(2+). Asp60, Arg84, and Gly106 together coordinate substrate. Arg144 contributes to the ATP binding site. Residue Arg163 coordinates substrate.

This sequence belongs to the shikimate kinase family. As to quaternary structure, monomer. Requires Mg(2+) as cofactor.

It localises to the cytoplasm. The catalysed reaction is shikimate + ATP = 3-phosphoshikimate + ADP + H(+). Its pathway is metabolic intermediate biosynthesis; chorismate biosynthesis; chorismate from D-erythrose 4-phosphate and phosphoenolpyruvate: step 5/7. Its function is as follows. Catalyzes the specific phosphorylation of the 3-hydroxyl group of shikimic acid using ATP as a cosubstrate. The chain is Shikimate kinase from Rhodopseudomonas palustris (strain ATCC BAA-98 / CGA009).